A 915-amino-acid chain; its full sequence is WD repeat-containing protein 44 (915 aa).

Positions 1–14 (MASESDTEEFYDAP) are enriched in acidic residues. The interval 1-24 (MASESDTEEFYDAPEDVHLGTGYP) is disordered. A2 bears the N-acetylalanine mark. Residues 2–173 (ASESDTEEFY…SSGEQLDASG (172 aa)) form a binding activity region. Residue S3 is modified to Phosphoserine. Positions 9–15 (EFYDAPE) match the FFAT-like motif motif. Position 11 is a phosphotyrosine (Y11). 6 positions are modified to phosphoserine: S27, S50, S66, S71, S81, and S126. Disordered stretches follow at residues 79-102 (DDSL…VAGT), 117-174 (LQQD…ASGL), and 208-282 (VEEV…PKEN). Residues 114-139 (EHELQQDSEKAESQNVAEESELETQK) are a coiled coil. Residues 146-155 (TCEKSEKTVD) show a composition bias toward basic and acidic residues. A phosphothreonine mark is found at T161 and T221. An important for interaction with ARHGAP26 AND ARHGAP10 region spans residues 213–259 (PAKPPRHLTPEPDIVASTKKPVPARPPPPTNFPPPRPPPPSRPAPPP). The span at 235-258 (PARPPPPTNFPPPRPPPPSRPAPP) shows a compositional bias: pro residues. At S264 the chain carries Phosphoserine. The segment covering 264-280 (SELEFEALKTPDLDVPK) has biased composition (basic and acidic residues). The residue at position 273 (T273) is a Phosphothreonine. Positions 336–349 (VMGPQRPRSNSGRE) are important for interaction with RAB11A. Phosphoserine occurs at positions 344 and 346. T351 and T403 each carry phosphothreonine. Disordered stretches follow at residues 399–425 (SNDA…RLKQ) and 461–481 (DEVF…GMPY). Residues S405, S472, S473, and S474 each carry the phosphoserine modification. Over residues 469–478 (DDPSSSDDEG) the composition is skewed to acidic residues. Y481 bears the Phosphotyrosine mark. The stretch at 511 to 550 (EHMGAVWTMKFSHCGRLLASAGQDNIVRIWALKNAFDYFN) is one WD 1 repeat. The disordered stretch occupies residues 559 to 593 (EGRVSPSPSQESLSSSKSDTDMGVCSGTDEDPDDK). Phosphoserine occurs at positions 563 and 567. Residues 563–575 (SPSPSQESLSSSK) are compositionally biased toward low complexity. WD repeat units follow at residues 607 to 645 (GHTA…CLCC), 647 to 687 (QHID…VALW), 692 to 731 (GQTK…YHTQ), 742 to 781 (KVGR…LSMK), 786 to 825 (VNSS…SKFT), 840 to 880 (AHNA…EVLD), and 882 to 915 (TSTG…KTVS).

As to quaternary structure, interacts with the GTP-bound form of RAB11 when membrane-associated. Interacts with GRAF1/ARHGAP26 or GRAF2/ARHGAP10; the interaction connects the endoplasmic reticulum (ER) with the endosomal tubule. Interacts (via FFAT-like motif) with VAPA (via MSP domain) or VAPB (via MSP domain); the interaction connects the ER with the endosomal tubule. Does not bind to other Rab and Rho small G proteins. Post-translationally, phosphorylated by ATK1; the phosphorylation stabilizes its interaction with RAB11A and RAB11B.

It localises to the cytoplasm. Its subcellular location is the cytosol. The protein localises to the perinuclear region. It is found in the endosome membrane. The protein resides in the golgi apparatus. It localises to the trans-Golgi network. Its function is as follows. Downstream effector for Rab11 which regulates Rab11 intracellular membrane trafficking functions such as endocytic recycling, intracellular ciliogenesis and protein export. ATK1-mediated phosphorylation of WDR44 induces binding to Rab11 which activates endocytic recycling of transferrin receptor back to the plasma membrane. When bound to Rab11, prevents the formation of the ciliogenic Rab11-Rabin8/RAB3IP-RAB11FIP3 complex, therefore inhibiting preciliary trafficking and ciliogenesis. Participates in neo-synthesized protein export by connecting the endoplasmic reticulum (ER) with the endosomal tubule via direct interactions with the integral ER proteins VAPA or VAPB and the endosomal protein GRAFs (GRAF1/ARHGAP26 or GRAF2/ARHGAP10), which facilitates the transfer of proteins such as E-cadherin, MPP14 and CFTR into a Rab8-Rab10-Rab11-dependent export route. The sequence is that of WD repeat-containing protein 44 from Mus musculus (Mouse).